The primary structure comprises 327 residues: Undecaprenyl-phosphate 4-deoxy-4-formamido-L-arabinose transferase (327 aa).

Transmembrane regions (helical) follow at residues 236 to 256 and 270 to 290; these read LSIF…LLVV and VFML…GMGL.

Belongs to the glycosyltransferase 2 family.

It localises to the cell inner membrane. It catalyses the reaction UDP-4-deoxy-4-formamido-beta-L-arabinose + di-trans,octa-cis-undecaprenyl phosphate = 4-deoxy-4-formamido-alpha-L-arabinopyranosyl di-trans,octa-cis-undecaprenyl phosphate + UDP. Its pathway is glycolipid biosynthesis; 4-amino-4-deoxy-alpha-L-arabinose undecaprenyl phosphate biosynthesis; 4-amino-4-deoxy-alpha-L-arabinose undecaprenyl phosphate from UDP-4-deoxy-4-formamido-beta-L-arabinose and undecaprenyl phosphate: step 1/2. It functions in the pathway bacterial outer membrane biogenesis; lipopolysaccharide biosynthesis. In terms of biological role, catalyzes the transfer of 4-deoxy-4-formamido-L-arabinose from UDP to undecaprenyl phosphate. The modified arabinose is attached to lipid A and is required for resistance to polymyxin and cationic antimicrobial peptides. In Klebsiella pneumoniae subsp. pneumoniae (strain ATCC 700721 / MGH 78578), this protein is Undecaprenyl-phosphate 4-deoxy-4-formamido-L-arabinose transferase.